Reading from the N-terminus, the 394-residue chain is MASLDSHVLMKLGSLFLSTLFVSIVSSESQCRNFESIISFGDSIADTGNLLGLSDHNNLPMSAFPPYGETFFHHPTGRFSDGRLIIDFIAEFLGLPYVPPYFGSTNGNFEKGVNFAVASATALESSFLEEKGYHCPHNFSLGVQLKIFKQSLPNLCGLPSDCRDMIGNALILMGEIGANDYNFPFFQLRPLDEVKELVPLVISTISSAITELIGMGGRTFLVPGGFPLGCSVAFLTLHQTSNMEEYDPLTGCLKWLNKFGEYHSEQLQEELNRLRKLNPHVNIIYADYYNASLRLGREPSKYGFINRHLSACCGVGGPYNFNLSRSCGSVGVEACSDPSKYVAWDGLHMTEAAHKSMADGLVKGPYAIPPFDWSCLSSMIKKKEVVGNTIFFDE.

Residues 1–27 (MASLDSHVLMKLGSLFLSTLFVSIVSS) form the signal peptide. Residue serine 43 is the Nucleophile of the active site. Residues asparagine 138, asparagine 290, and asparagine 322 are each glycosylated (N-linked (GlcNAc...) asparagine). Active-site residues include aspartate 345 and histidine 348.

Belongs to the 'GDSL' lipolytic enzyme family.

It localises to the secreted. The protein is GDSL esterase/lipase At1g31550 of Arabidopsis thaliana (Mouse-ear cress).